The chain runs to 195 residues: dCTP deaminase (195 aa).

DCTP-binding positions include 105–110 (RSSLGR), D123, 131–133 (TLE), Q152, Y166, K173, and Q177. Residue E133 is the Proton donor/acceptor of the active site. Residues 159 to 195 (KSPAERPYGAERGSKYQGQTGPQASRIQGDREFGGDQ) are disordered. Basic and acidic residues predominate over residues 160–172 (SPAERPYGAERGS). The span at 174–184 (YQGQTGPQASR) shows a compositional bias: polar residues. Positions 186–195 (QGDREFGGDQ) are enriched in basic and acidic residues.

This sequence belongs to the dCTP deaminase family. Homotrimer.

The catalysed reaction is dCTP + H2O + H(+) = dUTP + NH4(+). It functions in the pathway pyrimidine metabolism; dUMP biosynthesis; dUMP from dCTP (dUTP route): step 1/2. Functionally, catalyzes the deamination of dCTP to dUTP. This is dCTP deaminase from Natronomonas pharaonis (strain ATCC 35678 / DSM 2160 / CIP 103997 / JCM 8858 / NBRC 14720 / NCIMB 2260 / Gabara) (Halobacterium pharaonis).